Consider the following 181-residue polypeptide: Putative manganese efflux pump MntP (181 aa).

Helical transmembrane passes span 5 to 25 (LIALLIMASALGMDAFSIALG), 36 to 56 (MFKVGLTIGVFHVIMPLMGMV), 66 to 86 (GLFANWLGAGLLLWLGLVMIV), 102 to 122 (IGLFVFALSVSLDSLSAGLSL), 130 to 150 (ALAVVAMGVMSTVLSWLGLFI), and 158 to 178 (VGPYSELLGGFILCGFGVKLL).

Belongs to the MntP (TC 9.B.29) family.

The protein localises to the cell membrane. Functionally, probably functions as a manganese efflux pump. The sequence is that of Putative manganese efflux pump MntP from Halalkalibacterium halodurans (strain ATCC BAA-125 / DSM 18197 / FERM 7344 / JCM 9153 / C-125) (Bacillus halodurans).